The sequence spans 455 residues: Putative FBD-associated F-box protein At5g56400 (455 aa).

Positions 32-81 (VDKISDLPEDLLVHILSLLPTTNDIVATSGVSKRWESLWTKVHKLRFNDR) constitute an F-box domain. Residues 372–421 (WNQQPSYVPECLTKSLEIFEWRNYKATFRERDVAVYILKNSTCLKKTVIS) enclose the FBD domain.

In Arabidopsis thaliana (Mouse-ear cress), this protein is Putative FBD-associated F-box protein At5g56400.